The primary structure comprises 199 residues: NAD(P)H dehydrogenase (quinone) (199 aa).

The region spanning 4–190 (ILVLYYSMYG…AIARFQGEHV (187 aa)) is the Flavodoxin-like domain. FMN is bound by residues 10 to 15 (SMYGHI) and 79 to 81 (TRF). Y12 is an NAD(+) binding site. W99 provides a ligand contact to substrate. Residues 114-119 (STGTGG) and H134 each bind FMN.

This sequence belongs to the WrbA family. It depends on FMN as a cofactor.

The enzyme catalyses a quinone + NADH + H(+) = a quinol + NAD(+). It carries out the reaction a quinone + NADPH + H(+) = a quinol + NADP(+). This chain is NAD(P)H dehydrogenase (quinone), found in Yersinia pseudotuberculosis serotype O:1b (strain IP 31758).